A 407-amino-acid polypeptide reads, in one-letter code: Tyrosine--tRNA ligase 1 (407 aa).

Residue Tyr-35 coordinates L-tyrosine. Residues 40-49 (PTGDSLHVGH) carry the 'HIGH' region motif. The L-tyrosine site is built by Tyr-168 and Gln-172. The 'KMSKS' region signature appears at 228 to 232 (KMGKT). ATP is bound at residue Lys-231. The 67-residue stretch at 340 to 406 (SSILDVLVHT…GKKKYYKIVI (67 aa)) folds into the S4 RNA-binding domain.

This sequence belongs to the class-I aminoacyl-tRNA synthetase family. TyrS type 1 subfamily. In terms of assembly, homodimer.

It is found in the cytoplasm. It catalyses the reaction tRNA(Tyr) + L-tyrosine + ATP = L-tyrosyl-tRNA(Tyr) + AMP + diphosphate + H(+). Functionally, catalyzes the attachment of tyrosine to tRNA(Tyr) in a two-step reaction: tyrosine is first activated by ATP to form Tyr-AMP and then transferred to the acceptor end of tRNA(Tyr). The sequence is that of Tyrosine--tRNA ligase 1 from Clostridium acetobutylicum (strain ATCC 824 / DSM 792 / JCM 1419 / IAM 19013 / LMG 5710 / NBRC 13948 / NRRL B-527 / VKM B-1787 / 2291 / W).